The following is a 1184-amino-acid chain: Cartilage intermediate layer protein 1 (1184 aa).

The first 21 residues, 1-21 (MVGTKAWVFSFLVLEVTSVLG), serve as a signal peptide directing secretion. 2 N-linked (GlcNAc...) asparagine glycosylation sites follow: asparagine 129 and asparagine 132. The TSP type-1 domain occupies 149–201 (ERIWSPWSPWSKCSAACGQTGVQTRTRICLAEMVSLCSEASEEGQHCMGQDCT). Intrachain disulfides connect cysteine 161/cysteine 195, cysteine 165/cysteine 200, cysteine 177/cysteine 185, and cysteine 330/cysteine 376. One can recognise an Ig-like C2-type domain in the interval 309-395 (PYMVMNPETK…KSKVAQLIVI (87 aa)). 6 N-linked (GlcNAc...) asparagine glycosylation sites follow: asparagine 346, asparagine 420, asparagine 550, asparagine 631, asparagine 1000, and asparagine 1056. A disordered region spans residues 1136–1170 (TPAQSPAAGTVQGRVPSRRQQRASRGGQRQGGVVA). Residues 1158-1170 (ASRGGQRQGGVVA) show a composition bias toward low complexity.

As to quaternary structure, monomer. Interacts with TGFB1. In terms of processing, cleaved into 2 chains possibly by a furin-like protease upon or preceding secretion. In terms of tissue distribution, specifically expressed in cartilage. Localizes in the intermediates layer of articular cartilage but neither in the superficial nor in the deepest regions. Specifically and highly expressed in intervertebral disk tissue. Expression increases with aging in hip articular cartilage. Overexpressed in articular hyaline cartilage from patients with calcium pyrophosphate dihydrate crystal deposition disease (CPPD). Expression in intervertebral disk tissue from individuals with lumbar disk disease increases as disk degeneration progresses.

The protein localises to the secreted. It localises to the extracellular space. Its subcellular location is the extracellular matrix. Functionally, probably plays a role in cartilage scaffolding. May act by antagonizing TGF-beta1 (TGFB1) and IGF1 functions. Has the ability to suppress IGF1-induced proliferation and sulfated proteoglycan synthesis, and inhibits ligand-induced IGF1R autophosphorylation. May inhibit TGFB1-mediated induction of cartilage matrix genes via its interaction with TGFB1. Overexpression may lead to impair chondrocyte growth and matrix repair and indirectly promote inorganic pyrophosphate (PPi) supersaturation in aging and osteoarthritis cartilage. This Homo sapiens (Human) protein is Cartilage intermediate layer protein 1 (CILP).